The chain runs to 527 residues: Cytochrome P450 monooygenase 3 (527 aa).

The chain crosses the membrane as a helical span at residues 21–41 (IAVAFAALCGATGLLAFSWWI). Cysteine 473 provides a ligand contact to heme.

It belongs to the cytochrome P450 family. Heme serves as cofactor.

The protein resides in the membrane. It functions in the pathway plant hormone biosynthesis; gibberellin biosynthesis. In terms of biological role, gibberellin 13-hydroxylase; part of the gene cluster that mediates the biosynthesis of gibberellins (GAs), diterpenoids that may provide a selective advantage during infection of the preferred host plant, rice. Gibberellins (GAs) are diterpenoids and are synthesized via the mevalonate pathway. Biosynthesis of the major metabolite GA3 (gibberellic acid) from geranylgeranyl diphosphate (GGPP) requires 13 steps. The GGPP produced by the geranylgeranyl diphosphate synthase GGS2 is converted to ent-kaurene via ent-copalyldiphosphate in a two-step cyclization reaction performed by the bifunctional ent-copalyl diphosphate synthase/ent-kaurene synthase enzyme (CPS/KS). Ent-Kaurene is metabolized to GAs by a series of oxidation reactions catalyzed by cytochrome P450 monooxygenases. Cytochrome P450 monooxygenase P450-4 is an ent-kaurene oxidase that catalyzes the three oxidation steps between ent-kaurene and ent-kaurenoic acid. The highly multifunctional cytochrome P450 monooxygenase P450-1 then catalyzes four steps involving oxidation at two carbon atoms, in the main pathway from ent-kaurenoic acid to GA14 via GA12-aldehyde as well as producing kaurenolides and fujenoic acids as by-products. The cytochrome P450 monooxygenase P450-2 then converts GA14 to GA4 by removal of C-20. GA4 is further converted to GA7 by the GA4 desaturase DES via 1,2-desaturation before cytochrome P450 monooxygenase P450-3, a 13-hydroxylase, hydroxylates GA7 to GA3, the final product of the GA-biosynthetic pathway. The protein is Cytochrome P450 monooygenase 3 of Gibberella fujikuroi (strain CBS 195.34 / IMI 58289 / NRRL A-6831) (Bakanae and foot rot disease fungus).